A 23-amino-acid chain; its full sequence is Acidic phospholipase A2 CHA-E6b (23 aa).

This sequence belongs to the phospholipase A2 family. Group II subfamily. D49 sub-subfamily. Ca(2+) serves as cofactor. Contains 7 disulfide bonds. As to expression, expressed by the venom gland.

It localises to the secreted. The enzyme catalyses a 1,2-diacyl-sn-glycero-3-phosphocholine + H2O = a 1-acyl-sn-glycero-3-phosphocholine + a fatty acid + H(+). In terms of biological role, snake venom phospholipase A2 (PLA2) that shows high lipolytic (1200 umol/mg/min) and weak ADP-induced platelet aggregation activities. Also shows weak anticoagulant activity (IC(50) of about 1.0 uM). PLA2 catalyzes the calcium-dependent hydrolysis of the 2-acyl groups in 3-sn-phosphoglycerides. This is Acidic phospholipase A2 CHA-E6b from Crotalus horridus (Timber rattlesnake).